The sequence spans 145 residues: Meiotically up-regulated gene 124 protein (145 aa).

The next 2 helical transmembrane spans lie at 18–38 (IILT…CPSI) and 95–115 (FAWS…NFFL).

The protein resides in the membrane. In terms of biological role, has a role in meiosis. The polypeptide is Meiotically up-regulated gene 124 protein (mug124) (Schizosaccharomyces pombe (strain 972 / ATCC 24843) (Fission yeast)).